The chain runs to 809 residues: Phenylalanine--tRNA ligase beta subunit (809 aa).

The region spanning A39 to R153 is the tRNA-binding domain. A B5 domain is found at P404 to A479. Mg(2+)-binding residues include D457, D463, E466, and E467. The FDX-ACB domain maps to P706–R808.

The protein belongs to the phenylalanyl-tRNA synthetase beta subunit family. Type 1 subfamily. Tetramer of two alpha and two beta subunits. Requires Mg(2+) as cofactor.

The protein resides in the cytoplasm. It carries out the reaction tRNA(Phe) + L-phenylalanine + ATP = L-phenylalanyl-tRNA(Phe) + AMP + diphosphate + H(+). This is Phenylalanine--tRNA ligase beta subunit from Ralstonia nicotianae (strain ATCC BAA-1114 / GMI1000) (Ralstonia solanacearum).